The following is a 962-amino-acid chain: Protease 3 (962 aa).

Positions 1–23 (MPRSTWFKALLLFVALWAPLSQA) are cleaved as a signal peptide. Position 88 (His-88) interacts with Zn(2+). Glu-91 functions as the Proton acceptor in the catalytic mechanism. Zn(2+) is bound by residues His-92 and Glu-169.

It belongs to the peptidase M16 family. As to quaternary structure, monomer. Zn(2+) is required as a cofactor.

The protein resides in the periplasm. It catalyses the reaction Preferential cleavage of 16-Tyr-|-Leu-17 and 25-Phe-|-Tyr-26 bonds of oxidized insulin B chain. Also acts on other substrates of Mw less than 7 kDa such as insulin and glucagon.. Endopeptidase that degrades small peptides of less than 7 kDa, such as glucagon and insulin. The chain is Protease 3 (ptrA) from Shigella flexneri.